The chain runs to 562 residues: NAD-dependent malic enzyme 1 (562 aa).

The active-site Proton donor is the Tyr101. Arg154 lines the NAD(+) pocket. The active-site Proton acceptor is Lys172. The a divalent metal cation site is built by Glu243, Asp244, and Asp267. NAD(+) contacts are provided by Asp267 and Asn415.

This sequence belongs to the malic enzymes family. In terms of assembly, homotetramer. It depends on Mg(2+) as a cofactor. The cofactor is Mn(2+).

The catalysed reaction is (S)-malate + NAD(+) = pyruvate + CO2 + NADH. The enzyme catalyses oxaloacetate + H(+) = pyruvate + CO2. This Vibrio vulnificus (strain YJ016) protein is NAD-dependent malic enzyme 1.